The sequence spans 247 residues: Ribonuclease 3 (247 aa).

An RNase III domain is found at 5–147 (LIALQERLQH…LIGAVYLDAG (143 aa)). Mg(2+) is bound at residue glutamate 40. Aspartate 44 is an active-site residue. The disordered stretch occupies residues 104–124 (QRRSRRRCADELQPDEAGSGG). Residues aspartate 133 and glutamate 136 each contribute to the Mg(2+) site. Glutamate 136 is a catalytic residue. The 71-residue stretch at 174–244 (DAKTALQEWL…AAAMLATLKA (71 aa)) folds into the DRBM domain.

Belongs to the ribonuclease III family. Homodimer. The cofactor is Mg(2+).

It localises to the cytoplasm. The catalysed reaction is Endonucleolytic cleavage to 5'-phosphomonoester.. Digests double-stranded RNA. Involved in the processing of primary rRNA transcript to yield the immediate precursors to the large and small rRNAs (23S and 16S). Processes some mRNAs, and tRNAs when they are encoded in the rRNA operon. Processes pre-crRNA and tracrRNA of type II CRISPR loci if present in the organism. This Verminephrobacter eiseniae (strain EF01-2) protein is Ribonuclease 3.